A 504-amino-acid chain; its full sequence is Maturase K (504 aa).

The protein belongs to the intron maturase 2 family. MatK subfamily.

The protein resides in the plastid. Its subcellular location is the chloroplast. Its function is as follows. Usually encoded in the trnK tRNA gene intron. Probably assists in splicing its own and other chloroplast group II introns. This Nepenthes gracilis (Slender pitcher plant) protein is Maturase K.